The following is a 263-amino-acid chain: Hydroxyethylthiazole kinase (263 aa).

Substrate is bound at residue Met41. Residues Lys117 and Ser163 each coordinate ATP. Gly190 contacts substrate.

It belongs to the Thz kinase family. Mg(2+) is required as a cofactor.

It carries out the reaction 5-(2-hydroxyethyl)-4-methylthiazole + ATP = 4-methyl-5-(2-phosphooxyethyl)-thiazole + ADP + H(+). Its pathway is cofactor biosynthesis; thiamine diphosphate biosynthesis; 4-methyl-5-(2-phosphoethyl)-thiazole from 5-(2-hydroxyethyl)-4-methylthiazole: step 1/1. Catalyzes the phosphorylation of the hydroxyl group of 4-methyl-5-beta-hydroxyethylthiazole (THZ). The polypeptide is Hydroxyethylthiazole kinase (Thermoanaerobacter sp. (strain X514)).